The following is a 358-amino-acid chain: UDP-N-acetylglucosamine--N-acetylmuramyl-(pentapeptide) pyrophosphoryl-undecaprenol N-acetylglucosamine transferase (358 aa).

Residues 11-13 (TGG), asparagine 122, arginine 161, serine 189, isoleucine 243, 262-267 (ALTVCE), and glutamine 288 contribute to the UDP-N-acetyl-alpha-D-glucosamine site.

The protein belongs to the glycosyltransferase 28 family. MurG subfamily.

It localises to the cell inner membrane. It catalyses the reaction di-trans,octa-cis-undecaprenyl diphospho-N-acetyl-alpha-D-muramoyl-L-alanyl-D-glutamyl-meso-2,6-diaminopimeloyl-D-alanyl-D-alanine + UDP-N-acetyl-alpha-D-glucosamine = di-trans,octa-cis-undecaprenyl diphospho-[N-acetyl-alpha-D-glucosaminyl-(1-&gt;4)]-N-acetyl-alpha-D-muramoyl-L-alanyl-D-glutamyl-meso-2,6-diaminopimeloyl-D-alanyl-D-alanine + UDP + H(+). Its pathway is cell wall biogenesis; peptidoglycan biosynthesis. Its function is as follows. Cell wall formation. Catalyzes the transfer of a GlcNAc subunit on undecaprenyl-pyrophosphoryl-MurNAc-pentapeptide (lipid intermediate I) to form undecaprenyl-pyrophosphoryl-MurNAc-(pentapeptide)GlcNAc (lipid intermediate II). The sequence is that of UDP-N-acetylglucosamine--N-acetylmuramyl-(pentapeptide) pyrophosphoryl-undecaprenol N-acetylglucosamine transferase from Coxiella burnetii (strain CbuK_Q154) (Coxiella burnetii (strain Q154)).